Consider the following 790-residue polypeptide: MPAAIVHSADPSSTSILVEVEGMKCAGCVAAVERRLQQTAGVEAVSVNLITRLAKVDYDAALIEDPTVLTTEITGLGFRAQLRQDDNPLTLPIAEIPPLQQQRLQLAIAAFLLIVSSWGHLGHWLDHPLPGTDQLWFHALLAIWALLGPGRSILQAGWQGLRCGAPNMNSLVLLGTGSAYLASLVALLWPQLGWVCFLDEPVMLLGFILLGRTLEEQARFRSQAALQNLLALQPETTQLLTAPSSIAPQDLLEAPAQIWPVAQLRAGDYVQVLPGVRIPVDGCIVAGQSTLDTAMLTGEPLPQPCQVGDRVCAGTLNLSHRLVIRAEQTGSQTRLAAIVRCVAEAQQRKAPVQRFADAIAGRFVYGVCAIAALTFGFWATLGSRWWPQVLQQPLPGLLIHAPHHGMEMAHPHSHSPLLLALTLAISVLVVACPCALGLATPTAILVATGLAAEQGILVRGGDVLEQLARIKHFVFDKTGTLTQGQFELIEIQPLADVDPDRLLQWAAALEADSRHPLATALQTAAQAANLAPIAASDRQQVPGLGVSGTCDGRSLRLGNPTWVQVATAKLPTGSAAATSIWLADDQQLLACFWLQDQPRPEAAEVVQALRSRGATVQILSGDRQTTAVALAQQLGLESETVVAEVLPEDKAAAIAALQSQGDAVAMIGDGINDAPALATAAVGISLAAGSDIAQDSAGLLLSRDRLDSVLVAWNLSQMGLRTIRQNLTWALGYNVVMLPLAAGAFLPAYGLALTPAIAGACMAVSSLAVVSNSLLLRYWFRRSLNHSVSV.

Topologically, residues 1-105 (MPAAIVHSAD…IPPLQQQRLQ (105 aa)) are cytoplasmic. The HMA domain occupies 14-81 (TSILVEVEGM…EITGLGFRAQ (68 aa)). Residues Cys25 and Cys28 each coordinate Cu cation. A helical transmembrane segment spans residues 106–125 (LAIAAFLLIVSSWGHLGHWL). At 126–134 (DHPLPGTDQ) the chain is on the extracellular side. The helical transmembrane segment at 135 to 154 (LWFHALLAIWALLGPGRSIL) threads the bilayer. Residues 155-166 (QAGWQGLRCGAP) lie on the Cytoplasmic side of the membrane. Residues 167–189 (NMNSLVLLGTGSAYLASLVALLW) traverse the membrane as a helical segment. Residues 190–193 (PQLG) are Extracellular-facing. The chain crosses the membrane as a helical span at residues 194–211 (WVCFLDEPVMLLGFILLG). Residues 212–357 (RTLEEQARFR…RKAPVQRFAD (146 aa)) lie on the Cytoplasmic side of the membrane. Residues 358–380 (AIAGRFVYGVCAIAALTFGFWAT) traverse the membrane as a helical segment. Residues 381 to 416 (LGSRWWPQVLQQPLPGLLIHAPHHGMEMAHPHSHSP) are Extracellular-facing. The helical transmembrane segment at 417-439 (LLLALTLAISVLVVACPCALGLA) threads the bilayer. The Cytoplasmic segment spans residues 440–726 (TPTAILVATG…QMGLRTIRQN (287 aa)). Asp476 serves as the catalytic 4-aspartylphosphate intermediate. Mg(2+)-binding residues include Asp669 and Asp673. Residues 727–749 (LTWALGYNVVMLPLAAGAFLPAY) traverse the membrane as a helical segment. At 750–753 (GLAL) the chain is on the extracellular side. The helical transmembrane segment at 754-776 (TPAIAGACMAVSSLAVVSNSLLL) threads the bilayer. The Cytoplasmic segment spans residues 777 to 790 (RYWFRRSLNHSVSV).

Belongs to the cation transport ATPase (P-type) (TC 3.A.3) family. Type IB subfamily.

It localises to the cell membrane. It catalyses the reaction Cu(2+)(in) + ATP + H2O = Cu(2+)(out) + ADP + phosphate + H(+). Functionally, involved in copper transport. This is Probable copper-transporting ATPase SynA (synA) from Synechococcus sp. (strain ATCC 27144 / PCC 6301 / SAUG 1402/1) (Anacystis nidulans).